The following is a 166-amino-acid chain: MALYEHVFLARQDLSQQQVDALVEQYKGVISANGGSVGRVENWGLKSLTYRVNKNRKAYYTLMDLNCPPAALNEMERQMGLSEDVLRFLTIKVEAHEEGPSAMMQKREERSERGSFGDRDRGDRGPRSFGDRDRGDRGDRPPRSFGDAGGDRGPRRPREGFEGGAE.

2 stretches are compositionally biased toward basic and acidic residues: residues H96 to P142 and G149 to E166. The interval H96–E166 is disordered.

Belongs to the bacterial ribosomal protein bS6 family.

Functionally, binds together with bS18 to 16S ribosomal RNA. This chain is Small ribosomal subunit protein bS6, found in Mesorhizobium japonicum (strain LMG 29417 / CECT 9101 / MAFF 303099) (Mesorhizobium loti (strain MAFF 303099)).